Consider the following 93-residue polypeptide: Non-histone chromosomal protein 6A (93 aa).

2 disordered regions span residues 1-23 and 69-93; these read MVTP…APKR and PYEA…ATLA. Basic residues predominate over residues 7–16; it reads PKKRTTRKKK. Positions 21–89 form a DNA-binding region, HMG box; that stretch reads PKRALSAYMF…RYESEKELYN (69 aa). A compositionally biased stretch (basic and acidic residues) spans 69–87; the sequence is PYEAKAQADKKRYESEKEL.

Belongs to the NHP6 family. Weakly associates with the stable SPT16-POB3 heterodimer to form the FACT (yFACT or SNP) complex, which is associated with nucleosomes. Multiple molecules of NHP6 (NHP6A and/or NHP6B) are required to recruit the SPT16-POB3 heterodimer to DNA.

It localises to the nucleus. Its subcellular location is the chromosome. In terms of biological role, DNA-binding protein that induces severe bending of DNA. Required for DNA-binding by the FACT complex, a general chromatin factor that acts to reorganize nucleosomes. The FACT complex is involved in multiple processes that require DNA as a template such as mRNA elongation, DNA replication and DNA repair. Also augments the fidelity of transcription by RNA polymerase III independently of any role in the FACT complex. Required for transcriptional initiation fidelity of some but not all tRNA genes. Seems to be functionally redundant with NHP6B. The polypeptide is Non-histone chromosomal protein 6A (NHP6A) (Saccharomyces cerevisiae (strain ATCC 204508 / S288c) (Baker's yeast)).